The sequence spans 155 residues: Small ribosomal subunit protein uS7 (155 aa).

Belongs to the universal ribosomal protein uS7 family. In terms of assembly, part of the 30S ribosomal subunit. Contacts proteins S9 and S11.

One of the primary rRNA binding proteins, it binds directly to 16S rRNA where it nucleates assembly of the head domain of the 30S subunit. Is located at the subunit interface close to the decoding center, probably blocks exit of the E-site tRNA. In Thermosipho melanesiensis (strain DSM 12029 / CIP 104789 / BI429), this protein is Small ribosomal subunit protein uS7.